A 124-amino-acid polypeptide reads, in one-letter code: Small ribosomal subunit protein bS6 (124 aa).

Residues 93–124 form a disordered region; sequence KKAETGPSSMMKTVEREEARKAQQAEYAANNS. Residues 105–115 are compositionally biased toward basic and acidic residues; that stretch reads TVEREEARKAQ.

It belongs to the bacterial ribosomal protein bS6 family.

Functionally, binds together with bS18 to 16S ribosomal RNA. The protein is Small ribosomal subunit protein bS6 of Variovorax paradoxus (strain S110).